The primary structure comprises 469 residues: Cold shock protein CS66 (469 aa).

21 consecutive repeat copies span residues 9 to 31 (GEKKGIMEKIKEKLPGGHGDHKE), 49 to 62 (TGGAYGQEGHTGTT), 72 to 94 (GEKKGVMENIKDKLPGGHADHQQ), 95 to 108 (TGGTYGQQGHTGTA), 115 to 128 (TGGTYGQQGHTGTA), 135 to 148 (TNGTYGEHGHTGTA), 149 to 162 (TGGSYGEQRHTGVT), 170 to 192 (GEKKSLMENIKEKLPGGHGDNQQ), 193 to 206 (TAGTYGQQGHFATG), 213 to 226 (TGGTYGEQGHAGVT), 234 to 256 (GEKKGLMENIKDKLPGGHGDHQQ), 257 to 270 (TGGTYGQQGHTGAA), 277 to 290 (GGGTYEQHGHTGMT), 298 to 320 (GGKKGVMENIKDKLPGGHSDNQQ), 321 to 334 (TGGAYEQQGHTGAA), 341 to 354 (SGGTYEQHGHTGMT), 362 to 384 (GEKKAVMENIKDKLPGGHGDHQQ), 385 to 398 (TGGAYGQQGHTGTA), 405 to 418 (GGGTYEQHGNTGMT), 428 to 441 (TGGTHGQHGHTGTT), and 452 to 469 (GEKKSLMDKIKDKLPGQH). The 7 X 23 AA approximate repeats stretch occupies residues 9–390 (GEKKGIMEKI…DHQQTGGAYG (382 aa)). The segment at 49–441 (TGGAYGQEGH…HGQHGHTGTT (393 aa)) is 14 X 14 AA approximate repeats. The segment at 87-112 (GGHADHQQTGGTYGQQGHTGTATHGT) is disordered. Residues 93–112 (QQTGGTYGQQGHTGTATHGT) show a composition bias toward low complexity. Residues 203 to 214 (FATGTHGTPATG) show a composition bias toward low complexity. The segment at 203 to 469 (FATGTHGTPA…KIKDKLPGQH (267 aa)) is disordered. Basic and acidic residues predominate over residues 233–254 (TGEKKGLMENIKDKLPGGHGDH). Low complexity predominate over residues 255 to 274 (QQTGGTYGQQGHTGAATHGT). The span at 288–301 (GMTGTGTHGTGGKK) shows a compositional bias: gly residues. The segment covering 302–312 (GVMENIKDKLP) has biased composition (basic and acidic residues). A compositionally biased stretch (basic and acidic residues) spans 361–382 (TGEKKAVMENIKDKLPGGHGDH). 2 stretches are compositionally biased toward low complexity: residues 383–402 (QQTGGAYGQQGHTGTATHGT) and 412–429 (HGNTGMTGTETHGTTATG). Gly residues predominate over residues 439-450 (GTTGTGTHGTDG). The span at 451-469 (VGEKKSLMDKIKDKLPGQH) shows a compositional bias: basic and acidic residues.

It belongs to the plant dehydrin family.

May reduce intracellular freezing damage during winter by hydrogen-bonding to the lattice of the nascent ice crystals, thus modifying the structure and/or propagation of ice crystals. The sequence is that of Cold shock protein CS66 (CS66) from Triticum aestivum (Wheat).